Consider the following 258-residue polypeptide: Acetylglutamate kinase (258 aa).

Substrate contacts are provided by residues 40-41 (GG), arginine 62, and asparagine 158.

It belongs to the acetylglutamate kinase family. ArgB subfamily.

Its subcellular location is the cytoplasm. The enzyme catalyses N-acetyl-L-glutamate + ATP = N-acetyl-L-glutamyl 5-phosphate + ADP. It functions in the pathway amino-acid biosynthesis; L-arginine biosynthesis; N(2)-acetyl-L-ornithine from L-glutamate: step 2/4. Functionally, catalyzes the ATP-dependent phosphorylation of N-acetyl-L-glutamate. The polypeptide is Acetylglutamate kinase (Azobacteroides pseudotrichonymphae genomovar. CFP2).